Consider the following 376-residue polypeptide: Ribonucleoside-diphosphate reductase subunit beta (376 aa).

Aspartate 85, glutamate 116, and histidine 119 together coordinate Fe cation. The active site involves tyrosine 123. 3 residues coordinate Fe cation: glutamate 205, glutamate 239, and histidine 242.

This sequence belongs to the ribonucleoside diphosphate reductase small chain family. As to quaternary structure, tetramer of two alpha and two beta subunits. Fe cation serves as cofactor.

It carries out the reaction a 2'-deoxyribonucleoside 5'-diphosphate + [thioredoxin]-disulfide + H2O = a ribonucleoside 5'-diphosphate + [thioredoxin]-dithiol. In terms of biological role, provides the precursors necessary for DNA synthesis. Catalyzes the biosynthesis of deoxyribonucleotides from the corresponding ribonucleotides. In Haemophilus influenzae (strain ATCC 51907 / DSM 11121 / KW20 / Rd), this protein is Ribonucleoside-diphosphate reductase subunit beta (nrdB).